Here is an 81-residue protein sequence, read N- to C-terminus: Short neurotoxin 1 (81 aa).

The signal sequence occupies residues 1–21; the sequence is MKTLLLTLVVVTIVFLDLGYT. 4 cysteine pairs are disulfide-bonded: Cys24/Cys43, Cys38/Cys60, Cys62/Cys73, and Cys74/Cys79.

This sequence belongs to the three-finger toxin family. Short-chain subfamily. Type I alpha-neurotoxin sub-subfamily. In terms of tissue distribution, expressed by the venom gland.

It localises to the secreted. In terms of biological role, binds to muscle nicotinic acetylcholine receptor (nAChR) and inhibit acetylcholine from binding to the receptor, thereby impairing neuromuscular transmission. This chain is Short neurotoxin 1, found in Notechis scutatus scutatus (Mainland tiger snake).